Consider the following 849-residue polypeptide: SMY2 homolog 2 (849 aa).

Residues 149–205 (ESQWKYIDSNGNIQGPFGTNNMSQWYQGGYFTPTLQICRLATSPEPFGVNDRFIRLG) enclose the GYF domain. Disordered regions lie at residues 305–505 (APLS…TTNL), 527–547 (DLKK…QLDR), 593–612 (TKIN…IKPD), and 634–661 (NRAS…NTSN). The segment covering 308–318 (STTSSRSNKTT) has biased composition (low complexity). Residues 319–331 (SSHEEKVPSHEEA) are compositionally biased toward basic and acidic residues. A Phosphothreonine modification is found at Thr-350. 3 stretches are compositionally biased toward basic and acidic residues: residues 361 to 375 (TKQE…KEQN), 387 to 403 (VDRK…KSKD), and 425 to 443 (LLEE…EEQR). Residues 410–484 (EEQKRFAKAE…EKQKELLNNI (75 aa)) are a coiled coil. Basic residues predominate over residues 444–455 (KLKKEKKLKQKQ). Positions 456-479 (KKEEEKLKKKKKEEGKLEKEKQKE) are enriched in basic and acidic residues. Over residues 483–505 (NILTGDTETPSSENTATSITTNL) the composition is skewed to polar residues. The segment covering 594–605 (KINSQSKINKAN) has biased composition (polar residues). Low complexity predominate over residues 644–661 (SRTPSPSSSALNSSNTSN).

It belongs to the SMY2/mpd2 family. Interacts with ribosomes. Interacts with EAP1 and MSL5 (via the GYP domain).

It localises to the cytoplasm. This chain is SMY2 homolog 2 (SYH1), found in Saccharomyces cerevisiae (strain ATCC 204508 / S288c) (Baker's yeast).